A 504-amino-acid chain; its full sequence is Beta-glucosidase 24 (504 aa).

The first 18 residues, 1–18 (MELLWLLLLLLMASSTSS), serve as a signal peptide directing secretion. Glutamine 47 is a binding site for a beta-D-glucoside. Asparagine 75 carries an N-linked (GlcNAc...) asparagine glycan. A beta-D-glucoside contacts are provided by residues histidine 151 and 196–197 (NE). Glutamate 197 serves as the catalytic Proton donor. A disulfide bridge connects residues cysteine 216 and cysteine 224. Asparagine 329 is a glycosylation site (N-linked (GlcNAc...) asparagine). Tyrosine 340 lines the a beta-D-glucoside pocket. Asparagine 371 is a glycosylation site (N-linked (GlcNAc...) asparagine). A beta-D-glucoside is bound at residue glutamate 411. The Nucleophile role is filled by glutamate 411. N-linked (GlcNAc...) asparagine glycosylation occurs at asparagine 421. A beta-D-glucoside contacts are provided by residues tryptophan 460, 467-468 (EW), and phenylalanine 476.

This sequence belongs to the glycosyl hydrolase 1 family.

It catalyses the reaction Hydrolysis of terminal, non-reducing beta-D-glucosyl residues with release of beta-D-glucose.. The sequence is that of Beta-glucosidase 24 (BGLU24) from Oryza sativa subsp. japonica (Rice).